A 179-amino-acid polypeptide reads, in one-letter code: Large ribosomal subunit protein uL5 (179 aa).

Belongs to the universal ribosomal protein uL5 family. As to quaternary structure, part of the 50S ribosomal subunit; part of the 5S rRNA/L5/L18/L25 subcomplex. Contacts the 5S rRNA and the P site tRNA. Forms a bridge to the 30S subunit in the 70S ribosome.

In terms of biological role, this is one of the proteins that bind and probably mediate the attachment of the 5S RNA into the large ribosomal subunit, where it forms part of the central protuberance. In the 70S ribosome it contacts protein S13 of the 30S subunit (bridge B1b), connecting the 2 subunits; this bridge is implicated in subunit movement. Contacts the P site tRNA; the 5S rRNA and some of its associated proteins might help stabilize positioning of ribosome-bound tRNAs. This Prochlorococcus marinus (strain AS9601) protein is Large ribosomal subunit protein uL5.